Here is a 235-residue protein sequence, read N- to C-terminus: Large ribosomal subunit protein uL1 (235 aa).

This sequence belongs to the universal ribosomal protein uL1 family. Part of the 50S ribosomal subunit.

In terms of biological role, binds directly to 23S rRNA. The L1 stalk is quite mobile in the ribosome, and is involved in E site tRNA release. Functionally, protein L1 is also a translational repressor protein, it controls the translation of the L11 operon by binding to its mRNA. This Prochlorococcus marinus subsp. pastoris (strain CCMP1986 / NIES-2087 / MED4) protein is Large ribosomal subunit protein uL1.